The primary structure comprises 130 residues: D-ribose pyranase (130 aa).

H20 serves as the catalytic Proton donor. Substrate-binding positions include D28, H97, and 119 to 121 (YAN).

This sequence belongs to the RbsD / FucU family. RbsD subfamily. Homodecamer.

It is found in the cytoplasm. The enzyme catalyses beta-D-ribopyranose = beta-D-ribofuranose. It functions in the pathway carbohydrate metabolism; D-ribose degradation; D-ribose 5-phosphate from beta-D-ribopyranose: step 1/2. Catalyzes the interconversion of beta-pyran and beta-furan forms of D-ribose. The chain is D-ribose pyranase from Heliobacterium modesticaldum (strain ATCC 51547 / Ice1).